Reading from the N-terminus, the 281-residue chain is Protein ZAR1-like 1.S (281 aa).

Residues 183-267 (QKYGFFQCKD…QDLCGRCKGQ (85 aa)) form a 3CxxC-type zinc finger.

This sequence belongs to the ZAR1 family. As to quaternary structure, component of a cytoplasmic ribonucleoprotein complex together with eif4enif1/4E-T and cpeb1. As to expression, expressed in oocytes.

The protein resides in the cytoplasm. It localises to the cytoplasmic ribonucleoprotein granule. Functionally, mRNA-binding protein required for maternal mRNA storage, translation and degradation during oocyte maturation. Controls timing of meiosis during oogenesis. Probably promotes formation of some phase-separated membraneless compartment that stores maternal mRNAs in oocytes: acts by undergoing liquid-liquid phase separation upon binding to maternal mRNAs. Binds to the 3'-UTR of maternal mRNAs, inhibiting their translation. The protein is Protein ZAR1-like 1.S of Xenopus laevis (African clawed frog).